We begin with the raw amino-acid sequence, 355 residues long: S-adenosylmethionine:tRNA ribosyltransferase-isomerase (355 aa).

This sequence belongs to the QueA family. As to quaternary structure, monomer.

It is found in the cytoplasm. It carries out the reaction 7-aminomethyl-7-carbaguanosine(34) in tRNA + S-adenosyl-L-methionine = epoxyqueuosine(34) in tRNA + adenine + L-methionine + 2 H(+). It participates in tRNA modification; tRNA-queuosine biosynthesis. In terms of biological role, transfers and isomerizes the ribose moiety from AdoMet to the 7-aminomethyl group of 7-deazaguanine (preQ1-tRNA) to give epoxyqueuosine (oQ-tRNA). This is S-adenosylmethionine:tRNA ribosyltransferase-isomerase from Pectobacterium carotovorum subsp. carotovorum (strain PC1).